Here is a 339-residue protein sequence, read N- to C-terminus: MIKVAAAGGGTGGHLYPLLAILETLAKRVDVKVLFFAVKGKIDERVVRKDHPEFETVSIDVRGLLRPLHHPKNLWRTLKIGIATIEVKKHLKRFKPDLVVLTGGYISGVVGLAAKDLGIPIFVHEQNVVPGLAVKVLSQYAKKVFVSFERTRDYLREWQDKIVVTGCPVRETEKEAPLKDFVLVLGGSLGSEAINELMEKVYPELQETQFVHSTGSDDWTERLSVFPNVTALTYIDPMGAYWKKAIASISRAGASTIAEMMYYGVPGILIPWESSAESHQLENALEAERLGYGIVIRENEASPRKIIESIDKVVKKGKIEKMKENPASKISEEILGEIM.

UDP-N-acetyl-alpha-D-glucosamine contacts are provided by residues 11–13 (TGG), Asn-127, Arg-170, Ser-188, Ile-235, and Gln-280.

Belongs to the glycosyltransferase 28 family. MurG subfamily.

Its subcellular location is the cell inner membrane. The enzyme catalyses di-trans,octa-cis-undecaprenyl diphospho-N-acetyl-alpha-D-muramoyl-L-alanyl-D-glutamyl-meso-2,6-diaminopimeloyl-D-alanyl-D-alanine + UDP-N-acetyl-alpha-D-glucosamine = di-trans,octa-cis-undecaprenyl diphospho-[N-acetyl-alpha-D-glucosaminyl-(1-&gt;4)]-N-acetyl-alpha-D-muramoyl-L-alanyl-D-glutamyl-meso-2,6-diaminopimeloyl-D-alanyl-D-alanine + UDP + H(+). It functions in the pathway cell wall biogenesis; peptidoglycan biosynthesis. In terms of biological role, cell wall formation. Catalyzes the transfer of a GlcNAc subunit on undecaprenyl-pyrophosphoryl-MurNAc-pentapeptide (lipid intermediate I) to form undecaprenyl-pyrophosphoryl-MurNAc-(pentapeptide)GlcNAc (lipid intermediate II). This chain is UDP-N-acetylglucosamine--N-acetylmuramyl-(pentapeptide) pyrophosphoryl-undecaprenol N-acetylglucosamine transferase, found in Thermotoga petrophila (strain ATCC BAA-488 / DSM 13995 / JCM 10881 / RKU-1).